The chain runs to 202 residues: Phospholipase A2 inhibitor gamma subunit A (202 aa).

Residues 1–19 (MKSLQIICLLFIFVARGSC) form the signal peptide. 8 disulfide bridges follow: C22–C47, C25–C32, C40–C68, C74–C95, C96–C101, C119–C144, C137–C166, and C170–C192.

Belongs to the CNF-like-inhibitor family. In terms of assembly, heteromer composed of subunit A and subunit B. In terms of tissue distribution, expressed by the liver.

Its subcellular location is the secreted. Functionally, inhibits the enzymatic activity of the phospholipase A2 (PLA2). This chain is Phospholipase A2 inhibitor gamma subunit A, found in Elaphe climacophora (Japanese rat snake).